The following is a 64-amino-acid chain: Translation machinery-associated protein 7 (64 aa).

The disordered stretch occupies residues 1–64 (MSGREGGKKK…GSGIKKSGKK (64 aa)). Residues 21–50 (DMDDDDVAFKQKQKEDQKAMEALKARASGK) are a coiled coil. The segment covering 27–44 (VAFKQKQKEDQKAMEALK) has biased composition (basic and acidic residues).

The protein belongs to the TMA7 family.

The sequence is that of Translation machinery-associated protein 7 (tma7) from Tetraodon nigroviridis (Spotted green pufferfish).